A 428-amino-acid chain; its full sequence is Dihydroorotase (428 aa).

Residues H59 and H61 each contribute to the Zn(2+) site. Residues 61-63 (HFR) and N93 each bind substrate. Residues D151, H178, and H231 each contribute to the Zn(2+) site. N277 contributes to the substrate binding site. Residue D304 coordinates Zn(2+). D304 is an active-site residue. Substrate is bound by residues H308 and 322-323 (FG).

It belongs to the metallo-dependent hydrolases superfamily. DHOase family. Class I DHOase subfamily. In terms of assembly, homodimer. The cofactor is Zn(2+).

It carries out the reaction (S)-dihydroorotate + H2O = N-carbamoyl-L-aspartate + H(+). Its pathway is pyrimidine metabolism; UMP biosynthesis via de novo pathway; (S)-dihydroorotate from bicarbonate: step 3/3. Its function is as follows. Catalyzes the reversible cyclization of carbamoyl aspartate to dihydroorotate. The sequence is that of Dihydroorotase from Bacillus subtilis (strain 168).